The sequence spans 597 residues: Nuclear receptor subfamily 4 group A member 1 (597 aa).

The disordered stretch occupies residues 1–22 (MPCIQAQYGTPATSPGPRDHLT). A required for nuclear import region spans residues 170-465 (RVWTEQLPKA…PGEGKLIFCS (296 aa)). Positions 263–338 (EGRCAVCGDN…VGMVKEVVRT (76 aa)) form a DNA-binding region, nuclear receptor. 2 consecutive NR C4-type zinc fingers follow at residues 266–286 (CAVC…CEGC) and 302–326 (CLAN…FQKC). Residues 267–353 (AVCGDNASCQ…RRGRLPSKPK (87 aa)) form a required for binding NBRE-containing DNA region. Residues 298-360 (AKYICLANKD…KPKQPPDASP (63 aa)) are required for the interaction with RXRA. Phosphoserine; by PKA is present on Ser340. The tract at residues 341–360 (LKGRRGRLPSKPKQPPDASP) is disordered. Ser350 is subject to Phosphoserine; by PKA, RPS6KA1 and RPS6KA3. An NR LBD domain is found at 359 to 594 (SPTNLLTSLI…PIVDKIFMDT (236 aa)). Residues 520–543 (PRRVEELQNRIASCLKEHMAAVAG) are binds lipopolysaccharide. The AF-2 stretch occupies residues 583–594 (PPPIVDKIFMDT).

It belongs to the nuclear hormone receptor family. NR4 subfamily. In terms of assembly, binds the NGFI-B response element (NBRE) as a monomer. Binds the Nur response element (NurRE), consisting of two inverse NBRE-related octanucleotide repeats separated by 6 base-pairs, as a dimer. Interacts (via N-terminus) with NLRP3 (via LRR repeat domain); the interaction is direct, requires binding of NR4A1/Nur77 to NBRE-containing dsDNA and lipopolysaccharide, and leads to non-canonical NLRP3 inflammasome activation. Interacts with GADD45GIP1. Interacts with STK11. Interacts with IFI27. Heterodimer (via DNA-binding domain) with RXRA (via C-terminus); DNA-binding of the heterodimer is enhanced by 9-cis retinoic acid. Competes for the RXRA interaction with EP300 and thereby attenuates EP300 mediated acetylation of RXRA. Interacts with NCOA1. Interacts with NCOA2. Interacts with NCOA3. Requires Zn(2+) as cofactor. In terms of processing, phosphorylated at Ser-350 by RPS6KA1 and RPS6KA3 in response to mitogenic or stress stimuli. Phosphorylation of Ser-350 results in decrease in NBRE binding while phosphorylation of Ser-340 has little effect on it. Acetylated by p300/CBP, acetylation increases stability. Deacetylated by HDAC1. Expressed in lung, brain and superior cervical ganglia. High levels are seen in the adrenal tissue.

It localises to the nucleus. It is found in the cytoplasm. The protein localises to the cytosol. Its subcellular location is the mitochondrion. Orphan nuclear receptor. Binds the NGFI-B response element (NBRE) 5'-AAAGGTCA-3'. Binds 9-cis-retinoic acid outside of its ligand-binding (NR LBD) domain. Participates in energy homeostasis by sequestrating the kinase STK11 in the nucleus, thereby attenuating cytoplasmic AMPK activation. Regulates the inflammatory response in macrophages by regulating metabolic adaptations during inflammation, including repressing the transcription of genes involved in the citric acid cycle (TCA). Inhibits NF-kappa-B signaling by binding to low-affinity NF-kappa-B binding sites, such as at the IL2 promoter. May act concomitantly with NR4A2 in regulating the expression of delayed-early genes during liver regeneration. Plays a role in the vascular response to injury. Functionally, in the cytosol, upon its detection of both bacterial lipopolysaccharide (LPS) and NBRE-containing mitochondrial DNA released by GSDMD pores during pyroptosis, it promotes non-canonical NLRP3 inflammasome activation by stimulating association of NLRP3 and NEK7. The chain is Nuclear receptor subfamily 4 group A member 1 (Nr4a1) from Rattus norvegicus (Rat).